The following is a 363-amino-acid chain: Putative replication factor C small subunit L510 (363 aa).

47 to 54 (GPPGTGKT) is a binding site for ATP.

Belongs to the activator 1 small subunits family. RfcS subfamily.

Its function is as follows. Part of the RFC clamp loader complex which loads the PCNA sliding clamp onto DNA. The sequence is that of Putative replication factor C small subunit L510 from Acanthamoeba polyphaga mimivirus (APMV).